The chain runs to 356 residues: Delta(7)-sterol 5(6)-desaturase (356 aa).

The next 3 membrane-spanning stretches (helical) occupy residues 87 to 107 (LTLY…FAGL), 134 to 154 (QANI…LAEV), and 171 to 191 (WYDY…IYWI). Residues 179–303 (FFIAFTDLCI…FTTLWDRLGG (125 aa)) enclose the Fatty acid hydroxylase domain. The short motif at 192 to 196 (HRGLH) is the Histidine box-1 element. Residues 205–209 (HKPHH) carry the Histidine box-2 motif. The helical transmembrane segment at 235–255 (YIFPFLFPLSKIASVAFFVFV) threads the bilayer. The short motif at 280–284 (HTMHH) is the Histidine box-3 element.

The protein belongs to the sterol desaturase family. Requires Fe cation as cofactor.

It is found in the endoplasmic reticulum membrane. It carries out the reaction a Delta(7)-sterol + 2 Fe(II)-[cytochrome b5] + O2 + 2 H(+) = a Delta(5),Delta(7)-sterol + 2 Fe(III)-[cytochrome b5] + 2 H2O. It participates in steroid metabolism; ergosterol biosynthesis; ergosterol from zymosterol: step 3/5. Its function is as follows. Catalyzes the introduction of a C-5 double bond in the B ring of ergosterol. May contribute to the regulation of ergosterol biosynthesis. This Leptosphaeria maculans (Blackleg fungus) protein is Delta(7)-sterol 5(6)-desaturase (ERG3).